The sequence spans 218 residues: Elongation factor Ts (218 aa).

Residues 82–85 (TDFV) form an involved in Mg(2+) ion dislocation from EF-Tu region.

Belongs to the EF-Ts family.

It is found in the cytoplasm. Functionally, associates with the EF-Tu.GDP complex and induces the exchange of GDP to GTP. It remains bound to the aminoacyl-tRNA.EF-Tu.GTP complex up to the GTP hydrolysis stage on the ribosome. In Prochlorococcus marinus (strain MIT 9301), this protein is Elongation factor Ts.